The sequence spans 150 residues: MIFTKVDALVKDIDVDKYHIETVILSSDDLNKKIIRVKSDHGNEFGIRLDKGQKLQNGSAFFIDDHHVLAIGVESQDLIVISPKDMDEMGITAHILGNTHKPIEVKDAKIYLEVDPVVEQVLTQKEIAYTIEEVVLDKPLRHVNLTAHEH.

This sequence belongs to the UreE family.

It localises to the cytoplasm. Involved in urease metallocenter assembly. Binds nickel. Probably functions as a nickel donor during metallocenter assembly. This chain is Urease accessory protein UreE, found in Streptococcus salivarius (strain 57.I).